Here is a 366-residue protein sequence, read N- to C-terminus: Alanine racemase (366 aa).

Lysine 40 acts as the Proton acceptor; specific for D-alanine in catalysis. At lysine 40 the chain carries N6-(pyridoxal phosphate)lysine. Residue arginine 136 participates in substrate binding. The Proton acceptor; specific for L-alanine role is filled by tyrosine 263. Methionine 310 provides a ligand contact to substrate.

This sequence belongs to the alanine racemase family. The cofactor is pyridoxal 5'-phosphate.

It carries out the reaction L-alanine = D-alanine. The protein operates within amino-acid biosynthesis; D-alanine biosynthesis; D-alanine from L-alanine: step 1/1. In terms of biological role, catalyzes the interconversion of L-alanine and D-alanine. May also act on other amino acids. The protein is Alanine racemase (alr) of Streptococcus agalactiae serotype Ia (strain ATCC 27591 / A909 / CDC SS700).